A 179-amino-acid polypeptide reads, in one-letter code: Large ribosomal subunit protein uL6 (179 aa).

It belongs to the universal ribosomal protein uL6 family. Part of the 50S ribosomal subunit.

In terms of biological role, this protein binds to the 23S rRNA, and is important in its secondary structure. It is located near the subunit interface in the base of the L7/L12 stalk, and near the tRNA binding site of the peptidyltransferase center. The chain is Large ribosomal subunit protein uL6 from Alkaliphilus oremlandii (strain OhILAs) (Clostridium oremlandii (strain OhILAs)).